A 163-amino-acid polypeptide reads, in one-letter code: Neurotrophin-3 (163 aa).

Residues Ile1–Ser3 form the signal peptide. A propeptide spanning residues Ser4–Arg119 is cleaved from the precursor. The tract at residues Gln36–Gln61 is disordered. The span at Lys49–Gln61 shows a compositional bias: basic and acidic residues. A glycan (N-linked (GlcNAc...) asparagine) is linked at Asn112.

Belongs to the NGF-beta family.

It localises to the secreted. Its function is as follows. Seems to promote the survival of visceral and proprioceptive sensory neurons. The polypeptide is Neurotrophin-3 (NTF3) (Boa constrictor (Boa)).